A 425-amino-acid chain; its full sequence is Histidine--tRNA ligase (425 aa).

This sequence belongs to the class-II aminoacyl-tRNA synthetase family. In terms of assembly, homodimer.

It is found in the cytoplasm. The catalysed reaction is tRNA(His) + L-histidine + ATP = L-histidyl-tRNA(His) + AMP + diphosphate + H(+). In Desulforapulum autotrophicum (strain ATCC 43914 / DSM 3382 / VKM B-1955 / HRM2) (Desulfobacterium autotrophicum), this protein is Histidine--tRNA ligase.